The following is a 601-amino-acid chain: Adenine deaminase (601 aa).

Belongs to the metallo-dependent hydrolases superfamily. Adenine deaminase family. Mn(2+) is required as a cofactor.

It carries out the reaction adenine + H2O + H(+) = hypoxanthine + NH4(+). The protein is Adenine deaminase of Ruegeria sp. (strain TM1040) (Silicibacter sp.).